A 352-amino-acid chain; its full sequence is tRNA N6-adenosine threonylcarbamoyltransferase (352 aa).

Fe cation is bound by residues histidine 111 and histidine 115. Substrate-binding positions include 133–137 (LASGG), aspartate 166, glycine 179, and asparagine 275. Aspartate 300 contacts Fe cation.

The protein belongs to the KAE1 / TsaD family. Fe(2+) serves as cofactor.

Its subcellular location is the cytoplasm. It catalyses the reaction L-threonylcarbamoyladenylate + adenosine(37) in tRNA = N(6)-L-threonylcarbamoyladenosine(37) in tRNA + AMP + H(+). Required for the formation of a threonylcarbamoyl group on adenosine at position 37 (t(6)A37) in tRNAs that read codons beginning with adenine. Is involved in the transfer of the threonylcarbamoyl moiety of threonylcarbamoyl-AMP (TC-AMP) to the N6 group of A37, together with TsaE and TsaB. TsaD likely plays a direct catalytic role in this reaction. The polypeptide is tRNA N6-adenosine threonylcarbamoyltransferase (Treponema pallidum (strain Nichols)).